Here is a 268-residue protein sequence, read N- to C-terminus: Undecaprenyl-diphosphatase (268 aa).

Transmembrane regions (helical) follow at residues 41–61, 89–109, 114–134, 155–175, 191–211, 218–238, and 248–268; these read PGPSLSAIIQLGSVLALVCYF, IFIGTIPIILLGGTIKLFVPY, IFRSNLSIALVSFLMAILMYI, LIGLSQALAIFPGVSRSGVTI, FSFLLGMPAISFAAIVEFISS, FSFFPLIVGLTTTFLSSLLAI, and NGLKLFIIYRIVFGFVILLNL.

The protein belongs to the UppP family.

The protein resides in the cell inner membrane. The catalysed reaction is di-trans,octa-cis-undecaprenyl diphosphate + H2O = di-trans,octa-cis-undecaprenyl phosphate + phosphate + H(+). Catalyzes the dephosphorylation of undecaprenyl diphosphate (UPP). Confers resistance to bacitracin. The protein is Undecaprenyl-diphosphatase of Prochlorococcus marinus (strain MIT 9312).